A 91-amino-acid chain; its full sequence is Na(+)/H(+) antiporter subunit F (91 aa).

Helical transmembrane passes span 5-27 (ILMI…TLIG), 34-53 (IVAL…VIMM), and 63-82 (VVLV…SKFI).

Belongs to the CPA3 antiporters (TC 2.A.63) subunit F family. As to quaternary structure, forms a heterooligomeric complex that consists of seven subunits: MrpA, MrpB, MrpC, MrpD, MrpE, MrpF and MrpG.

It is found in the cell membrane. Mnh complex is a Na(+)Li(+)/H(+) antiporter involved in Na(+) and/or Li(+) excretion and Na(+) resistance. Na(+)/H(+) antiport consumes a transmembrane electrical potential, and is thus inferred to be electrogenic. Does not transport K(+), Ca(2+) or Mg(2+). The sequence is that of Na(+)/H(+) antiporter subunit F (mrpF) from Alkalihalophilus pseudofirmus (strain ATCC BAA-2126 / JCM 17055 / OF4) (Bacillus pseudofirmus).